A 379-amino-acid chain; its full sequence is Putative glutamate--cysteine ligase 2 (379 aa).

Belongs to the glutamate--cysteine ligase type 2 family. YbdK subfamily.

The catalysed reaction is L-cysteine + L-glutamate + ATP = gamma-L-glutamyl-L-cysteine + ADP + phosphate + H(+). In terms of biological role, ATP-dependent carboxylate-amine ligase which exhibits weak glutamate--cysteine ligase activity. The chain is Putative glutamate--cysteine ligase 2 from Roseiflexus sp. (strain RS-1).